Consider the following 691-residue polypeptide: Histone-lysine N-methyltransferase Set8 (691 aa).

Disordered regions lie at residues 1 to 22, 211 to 234, 345 to 381, 422 to 450, and 484 to 516; these read MIMVRRRARPAKETGGGSAAAA, RSGLRDSHSSSHSSSSSGGASATT, PAAGGGAGAAARRRKPATPHRILCPSPIKTLPRGDGG, SRRRLNQPKPQAPYQPQQPQPPPGTQPTN, and APAKPRAALTKGSKTKTGSKIQPGPLPLAATNG. Over residues 220-232 the composition is skewed to low complexity; sequence SSHSSSSSGGASA. Residues 431 to 446 show a composition bias toward pro residues; it reads PQAPYQPQQPQPPPGT. Residues 484–503 show a composition bias toward low complexity; that stretch reads APAKPRAALTKGSKTKTGSK. The SET domain occupies 555-676; that stretch reads EGLQVRNFMG…PGEELTYDYG (122 aa). S-adenosyl-L-methionine-binding positions include 565–567, Y610, and 637–638; these read KGR and NH.

The protein belongs to the class V-like SAM-binding methyltransferase superfamily. Histone-lysine methyltransferase family. PR/SET subfamily.

The protein localises to the nucleus. It localises to the chromosome. It catalyses the reaction L-lysyl(20)-[histone H4] + S-adenosyl-L-methionine = N(6)-methyl-L-lysyl(20)-[histone H4] + S-adenosyl-L-homocysteine + H(+). Histone methyltransferase that specifically monomethylates 'Lys-20' of histone H4. H4 'Lys-20' monomethylation is enriched during mitosis and represents a specific tag for epigenetic transcriptional repression. Mainly functions in euchromatin regions, thereby playing a central role in the silencing of euchromatic genes. Required for cell proliferation, possibly by contributing to the maintenance of proper higher-order structure of DNA and chromosome condensation during mitosis. This chain is Histone-lysine N-methyltransferase Set8, found in Drosophila pseudoobscura pseudoobscura (Fruit fly).